A 353-amino-acid polypeptide reads, in one-letter code: GDSL esterase/lipase APG (353 aa).

Positions 1 to 25 are cleaved as a signal peptide; it reads MDRCTSSFLLLTLVSTLSILQISFA. Ser-37 functions as the Nucleophile in the catalytic mechanism. Asn-197 and Asn-320 each carry an N-linked (GlcNAc...) asparagine glycan. Residues Asp-328 and His-331 contribute to the active site.

It belongs to the 'GDSL' lipolytic enzyme family.

The protein resides in the secreted. This chain is GDSL esterase/lipase APG (APG), found in Arabidopsis thaliana (Mouse-ear cress).